Here is a 108-residue protein sequence, read N- to C-terminus: Ig kappa chain V region K-25 (108 aa).

Positions 1-23 (AVELTQTPASVEAAVGGTVTIKC) are framework-1. Residues 24–34 (QASQBIYSYLS) form a complementarity-determining-1 region. Residues 35-49 (WYQQKPGQPPKLLIY) form a framework-2 region. The segment at 50-56 (KASTLAS) is complementarity-determining-2. Residues 57–88 (GVSSRFKGSGSGTEFTLTISDLZCADAATYYC) are framework-3. The tract at residues 89 to 97 (QTYSYSSTY) is complementarity-determining-3. The interval 98 to 107 (FGGGTEVVVK) is framework-4.

The polypeptide is Ig kappa chain V region K-25 (Oryctolagus cuniculus (Rabbit)).